Here is a 483-residue protein sequence, read N- to C-terminus: Cyclic AMP-dependent transcription factor ATF-7 (483 aa).

Residues 1 to 285 (MGDDRPFVCN…GMVVGSASTM (285 aa)) form a transactivation domain region. A C2H2-type zinc finger spans residues 7–31 (FVCNAPGCGQRFTNEDHLAVHKHKH). A Phosphothreonine; by MAPK11 modification is found at Thr-51. Phosphothreonine occurs at positions 53 and 101. A Glycyl lysine isopeptide (Lys-Gly) (interchain with G-Cter in SUMO1) cross-link involves residue Lys-107. Disordered regions lie at residues 110 to 148 (EPVE…TPTP) and 299 to 345 (HPDA…NRAA). Low complexity-rich tracts occupy residues 114–126 (VDSS…ASSP) and 307–320 (QPQV…PSTG). Residues 326–343 (TVDEDPDERRQRFLERNR) are compositionally biased toward basic and acidic residues. The bZIP domain maps to 332–395 (DERRQRFLER…AQLKQLLLAH (64 aa)). The tract at residues 334 to 354 (RRQRFLERNRAAASRCRQKRK) is basic motif. Positions 360–388 (LEKKAEELTSQNIQLSNEVTLLRNEVAQL) are leucine-zipper. Disordered regions lie at residues 407–440 (TQGY…SNGL) and 464–483 (LSMP…SAGR). 2 positions are modified to phosphoserine: Ser-413 and Ser-423. Positions 429–440 (QHSSATAPSNGL) are enriched in polar residues.

It belongs to the bZIP family. In terms of assembly, homodimer; binds DNA as homodimer. Heterodimer; heterodimerizes with other members of ATF family and with JUN family members. Interacts with JNK2; the interaction does not phosphorylate ATF7 but acts as a docking site for other ATF-associated partners such as JUN family members. Interacts (via its transactivation domain) with TAF12 (isoforms TAFII15 and TAFII20); the interaction potentiates the transactivation activity (isoform TAFII20 only) and is inhibited by ATF7 sumoylation. Interacts with TAF4; the interaction inhibits the TAF12-dependent transactivation. Interacts with MAPK9; the interaction does not phosphorylate ATF7 but acts as a docking site for ATF7-associated partners such as JUN. Interacts with Ku complex components XRCC6 and XRCC7. Interacts with TERT. On EGF stimulation, phosphorylated first on Thr-53 allowing subsequent phosphorylation on Thr-51. This latter phosphorylation prevents sumoylation, increases binding to TAF12 and enhances transcriptional activity. Social isolation stress as well as TNF-alpha also induce the phosphorylation of ATF7. Phosphorylated in proliferating colonic and small intestinal epithelial cells. In terms of processing, sumoylation delays nuclear localization and inhibits transactivation activity through preventing binding to TAF12. RANBP2 appears to be the specific E3 ligase.

It localises to the nucleus. Its subcellular location is the nucleoplasm. It is found in the chromosome. The protein localises to the telomere. Its function is as follows. Stress-responsive chromatin regulator that plays a role in various biological processes including innate immunological memory, adipocyte differentiation or telomerase regulation. In absence of stress, contributes to the formation of heterochromatin and heterochromatin-like structure by recruiting histone H3K9 tri- and di-methyltransferases thus silencing the transcription of target genes such as STAT1 in adipocytes, or genes involved in innate immunity in macrophages and adipocytes. Stress induces ATF7 phosphorylation that disrupts interactions with histone methyltransferase and enhances the association with coactivators containing histone acetyltransferase and/or histone demethylase, leading to disruption of the heterochromatin-like structure and subsequently transcriptional activation. In response to TNF-alpha, which is induced by various stresses, phosphorylated ATF7 and telomerase are released from telomeres leading to telomere shortening. Plays also a role in maintaining epithelial regenerative capacity and protecting against cell death during intestinal epithelial damage and repair. This is Cyclic AMP-dependent transcription factor ATF-7 (ATF7) from Pongo abelii (Sumatran orangutan).